Here is a 365-residue protein sequence, read N- to C-terminus: Phosphate acyltransferase (365 aa).

The protein belongs to the PlsX family. In terms of assembly, homodimer. Probably interacts with PlsY.

The protein localises to the cytoplasm. It catalyses the reaction a fatty acyl-[ACP] + phosphate = an acyl phosphate + holo-[ACP]. It functions in the pathway lipid metabolism; phospholipid metabolism. In terms of biological role, catalyzes the reversible formation of acyl-phosphate (acyl-PO(4)) from acyl-[acyl-carrier-protein] (acyl-ACP). This enzyme utilizes acyl-ACP as fatty acyl donor, but not acyl-CoA. The chain is Phosphate acyltransferase from Jannaschia sp. (strain CCS1).